Reading from the N-terminus, the 716-residue chain is DEAD-box ATP-dependent RNA helicase 31 (716 aa).

A disordered region spans residues 99-188; it reads GILKSDDEDE…LRLEDESSDE (90 aa). The span at 110 to 121 shows a compositional bias: basic and acidic residues; it reads DRSRGRNQEKRG. Positions 144 to 153 are enriched in polar residues; the sequence is SRIQGKSSEA. Residues 155-188 show a composition bias toward basic and acidic residues; it reads FRGRKETSFSRDREDEKGLRKREDLRLEDESSDE. Positions 248 to 276 match the Q motif motif; that stretch reads TRFDHYPLSPLSLKAIKDAGYETMTVVQE. The region spanning 279-462 is the Helicase ATP-binding domain; it reads LPIILKGKDV…LVALRRDHEF (184 aa). 292 to 299 contributes to the ATP binding site; the sequence is AKTGTGKT. The short motif at 410–413 is the DEAD box element; sequence DEAD. In terms of domain architecture, Helicase C-terminal spans 497–643; the sequence is LREHIMGNVD…IDPETVKKVQ (147 aa).

The protein belongs to the DEAD box helicase family.

The enzyme catalyses ATP + H2O = ADP + phosphate + H(+). The sequence is that of DEAD-box ATP-dependent RNA helicase 31 (RH31) from Arabidopsis thaliana (Mouse-ear cress).